A 269-amino-acid polypeptide reads, in one-letter code: NAD kinase (269 aa).

Asp45 acts as the Proton acceptor in catalysis. Residues 45–46, 122–123, Arg149, Asp151, and Ala186 each bind NAD(+); these read DG and NE.

It belongs to the NAD kinase family. The cofactor is a divalent metal cation.

It is found in the cytoplasm. The catalysed reaction is NAD(+) + ATP = ADP + NADP(+) + H(+). Functionally, involved in the regulation of the intracellular balance of NAD and NADP, and is a key enzyme in the biosynthesis of NADP. Catalyzes specifically the phosphorylation on 2'-hydroxyl of the adenosine moiety of NAD to yield NADP. This chain is NAD kinase, found in Staphylococcus epidermidis (strain ATCC 35984 / DSM 28319 / BCRC 17069 / CCUG 31568 / BM 3577 / RP62A).